The primary structure comprises 181 residues: Adenylyl-sulfate kinase (181 aa).

12 to 19 (GLSGAGKS) contacts ATP. Serine 86 functions as the Phosphoserine intermediate in the catalytic mechanism.

Belongs to the APS kinase family.

The catalysed reaction is adenosine 5'-phosphosulfate + ATP = 3'-phosphoadenylyl sulfate + ADP + H(+). The protein operates within sulfur metabolism; hydrogen sulfide biosynthesis; sulfite from sulfate: step 2/3. In terms of biological role, catalyzes the synthesis of activated sulfate. The polypeptide is Adenylyl-sulfate kinase (Microcystis aeruginosa (strain NIES-843 / IAM M-2473)).